A 387-amino-acid chain; its full sequence is Alkanesulfonate monooxygenase (387 aa).

The protein belongs to the SsuD family.

The catalysed reaction is an alkanesulfonate + FMNH2 + O2 = an aldehyde + FMN + sulfite + H2O + 2 H(+). Its function is as follows. Catalyzes the desulfonation of aliphatic sulfonates. In Xanthomonas axonopodis pv. citri (strain 306), this protein is Alkanesulfonate monooxygenase.